Here is a 405-residue protein sequence, read N- to C-terminus: uncharacterized protein (405 aa).

13 consecutive transmembrane segments (helical) span residues Ile-19–Val-39, Met-48–Leu-68, Ile-85–Ile-105, Ala-106–Ile-126, Ser-129–Gly-149, Gly-156–Trp-176, Gly-178–Leu-198, Gly-224–Phe-244, Gly-252–Pro-272, Val-283–Met-303, Ile-309–Ala-329, Thr-344–Met-364, and Trp-366–Leu-386.

Belongs to the major facilitator superfamily. YhhS family.

It is found in the cell inner membrane. This is an uncharacterized protein from Salmonella enteritidis PT4 (strain P125109).